We begin with the raw amino-acid sequence, 125 residues long: UPF0325 protein Ping_0715 (125 aa).

This sequence belongs to the UPF0325 family.

The chain is UPF0325 protein Ping_0715 from Psychromonas ingrahamii (strain DSM 17664 / CCUG 51855 / 37).